The following is a 173-amino-acid chain: Cell division protein SepF (173 aa).

The segment at 17–85 is disordered; sequence SDDEYISDET…NELRTITTVH (69 aa). Residues 35 to 52 show a composition bias toward low complexity; that stretch reads SAGGSSAAVSESGSTSVA.

Belongs to the SepF family. Homodimer. Interacts with FtsZ.

The protein resides in the cytoplasm. Cell division protein that is part of the divisome complex and is recruited early to the Z-ring. Probably stimulates Z-ring formation, perhaps through the cross-linking of FtsZ protofilaments. Its function overlaps with FtsA. The polypeptide is Cell division protein SepF (Kocuria rhizophila (strain ATCC 9341 / DSM 348 / NBRC 103217 / DC2201)).